The chain runs to 294 residues: Deubiquitinase OTUD6B (294 aa).

2 disordered regions span residues 1 to 46 and 67 to 120; these read MDEA…RKQL and AFAQ…ERDE. 2 stretches are compositionally biased toward polar residues: residues 27 to 36 and 73 to 86; these read KIQSMKNSVP and PEPT…NGVT. Residues 111–120 show a composition bias toward basic and acidic residues; it reads KAAQEKERDE. In terms of domain architecture, OTU spans 150-287; sequence LQIRQIPSDG…GEHYNSVELL (138 aa). Residues 155 to 161 form a cys-loop region; that stretch reads IPSDGHC. The active site involves Asp-158. The Nucleophile role is filled by Cys-161. The tract at residues 222–232 is variable-loop; that stretch reads IVNTPAWGGQL. Residues 270–280 form a his-loop region; the sequence is YMRHAYGLGEH. His-280 is an active-site residue.

It catalyses the reaction Thiol-dependent hydrolysis of ester, thioester, amide, peptide and isopeptide bonds formed by the C-terminal Gly of ubiquitin (a 76-residue protein attached to proteins as an intracellular targeting signal).. In terms of biological role, deubiquitinating enzyme that may play a role in the ubiquitin-dependent regulation of different cellular processes. The protein is Deubiquitinase OTUD6B (otud6b) of Xenopus tropicalis (Western clawed frog).